Reading from the N-terminus, the 208-residue chain is Uracil phosphoribosyltransferase (208 aa).

5-phospho-alpha-D-ribose 1-diphosphate contacts are provided by residues arginine 78, arginine 103, and 130 to 138; that span reads DPMLATGGS. Residues isoleucine 193 and 198–200 each bind uracil; that span reads GDA. Residue aspartate 199 coordinates 5-phospho-alpha-D-ribose 1-diphosphate.

The protein belongs to the UPRTase family. The cofactor is Mg(2+).

It catalyses the reaction UMP + diphosphate = 5-phospho-alpha-D-ribose 1-diphosphate + uracil. It participates in pyrimidine metabolism; UMP biosynthesis via salvage pathway; UMP from uracil: step 1/1. With respect to regulation, allosterically activated by GTP. Its function is as follows. Catalyzes the conversion of uracil and 5-phospho-alpha-D-ribose 1-diphosphate (PRPP) to UMP and diphosphate. This is Uracil phosphoribosyltransferase from Thermus thermophilus (strain ATCC 27634 / DSM 579 / HB8).